Here is a 168-residue protein sequence, read N- to C-terminus: Endoribonuclease YbeY (168 aa).

His122, His126, and His132 together coordinate Zn(2+).

It belongs to the endoribonuclease YbeY family. The cofactor is Zn(2+).

Its subcellular location is the cytoplasm. Functionally, single strand-specific metallo-endoribonuclease involved in late-stage 70S ribosome quality control and in maturation of the 3' terminus of the 16S rRNA. This is Endoribonuclease YbeY from Brucella abortus (strain 2308).